The following is a 321-amino-acid chain: Peroxidase 42 (321 aa).

Positions Met1 to Ala29 are cleaved as a signal peptide. Gln30 is modified (pyrrolidone carboxylic acid). 4 cysteine pairs are disulfide-bonded: Cys40–Cys118, Cys73–Cys78, Cys124–Cys315, and Cys202–Cys227. His71 serves as the catalytic Proton acceptor. Residues Asp72, Ile75, Gly77, Asp79, and Ser81 each contribute to the Ca(2+) site. Residues Asn85 and Asn96 are each glycosylated (N-linked (GlcNAc...) asparagine). Pro165 lines the substrate pocket. His195 is a binding site for heme b. Thr196 is a Ca(2+) binding site. Asn211 carries an N-linked (GlcNAc...) asparagine glycan. Residues Asp239, Thr242, and Gly247 each contribute to the Ca(2+) site. N-linked (GlcNAc...) asparagine glycosylation is present at Asn270.

The protein belongs to the peroxidase family. Classical plant (class III) peroxidase subfamily. Requires heme b as cofactor. Ca(2+) serves as cofactor.

Its subcellular location is the secreted. The catalysed reaction is 2 a phenolic donor + H2O2 = 2 a phenolic radical donor + 2 H2O. Removal of H(2)O(2), oxidation of toxic reductants, biosynthesis and degradation of lignin, suberization, auxin catabolism, response to environmental stresses such as wounding, pathogen attack and oxidative stress. These functions might be dependent on each isozyme/isoform in each plant tissue. This Zea mays (Maize) protein is Peroxidase 42 (PER42).